The sequence spans 393 residues: Sugar efflux transporter A (393 aa).

12 helical membrane-spanning segments follow: residues 22 to 42 (VIAF…SLFL), 51 to 71 (FMVG…SQIL), 82 to 102 (KTLI…YAWN), 107 to 127 (VLLF…PQLF), 152 to 172 (ISLS…GFGF), 174 to 194 (AMYL…WLLL), 219 to 239 (LLLF…LINM), 253 to 273 (LAGV…LLAG), 287 to 307 (LAVI…GSWA), 308 to 328 (LLAL…MGML), 344 to 364 (LFTN…GIVA), and 366 to 386 (VWSY…AAVC).

This sequence belongs to the major facilitator superfamily. Set transporter family.

The protein localises to the cell inner membrane. Its function is as follows. Involved in the efflux of sugars. The physiological role may be the reduction of the intracellular concentration of toxic sugars or sugar metabolites. Transports IPTG, lactose and arabinose. This Dickeya chrysanthemi (Pectobacterium chrysanthemi) protein is Sugar efflux transporter A (sotA).